An 846-amino-acid chain; its full sequence is Vinculin (846 aa).

The segment at 1–257 is interaction with TLN; it reads MPVKFHTKTL…VLQLTTTFEE (257 aa). Residues 315–370 are a coiled coil; that stretch reads RAKLLAAADELDQILKELEELQAKGLGDSRQARALAHAAAVKLQELEQEIRKALAE. The segment at 617 to 646 is disordered; the sequence is WVPPRPPLPELEEEEEPPELPPPPEDPASL.

This sequence belongs to the vinculin/alpha-catenin family. Monomer. Interacts with TLN (talin); the interaction facilitates VIN1 binding to F-actin. In terms of tissue distribution, expressed in epithelial tissues, specifically the pinacoderm (outer epithelium) and choanoderm (feeding epithelium) (at protein level). Also detected in migratory cells of the mesohyl (at protein level).

The protein resides in the cytoplasm. It is found in the cell cortex. It localises to the cell projection. The protein localises to the filopodium. Its subcellular location is the cytoskeleton. In terms of biological role, actin filament (F-actin)-binding protein which may play a role in cell-cell adhesion. The polypeptide is Vinculin (Oscarella pearsei (Sponge)).